We begin with the raw amino-acid sequence, 365 residues long: MKTIELFKFMISAKSQTPDDGGLLDFIQNYLDDFEAIRVDVEGVKNLFLYKKFSQGDHLCFAGHVDVVPAGDGWDSDPYIATERDGYIYGRGAQDMKSGVAAFVQAIKDTKHFNGTLSLLLTSDEEGEGTYGTIEVLNYLRDKSMLPDFAVVAEPTCEMVFGDAIKVGRRGSINGYITLRGKQGHAAYPEKSINPINLIAPKLANMAGVDLDNGDEFFSPSKFVITDIRAGMQVTNVTPNELKMMFNVRNTTLTSQKEIREFVEKNLEDLDYDLRLTQGSYPFKTDTKTKLVKNIDASIEQISGIKPKHSTAGGTSDARHMAPLGIDVIEFGVINDTIHAINERTTKDEVKKLYEVFKHLIDTWK.

Residue histidine 64 coordinates Zn(2+). The active site involves aspartate 66. Residue aspartate 95 participates in Zn(2+) binding. Catalysis depends on glutamate 125, which acts as the Proton acceptor. The Zn(2+) site is built by glutamate 126, glutamate 154, and histidine 339.

It belongs to the peptidase M20A family. DapE subfamily. As to quaternary structure, homodimer. Zn(2+) serves as cofactor. The cofactor is Co(2+).

It carries out the reaction N-succinyl-(2S,6S)-2,6-diaminopimelate + H2O = (2S,6S)-2,6-diaminopimelate + succinate. The protein operates within amino-acid biosynthesis; L-lysine biosynthesis via DAP pathway; LL-2,6-diaminopimelate from (S)-tetrahydrodipicolinate (succinylase route): step 3/3. Its function is as follows. Catalyzes the hydrolysis of N-succinyl-L,L-diaminopimelic acid (SDAP), forming succinate and LL-2,6-diaminopimelate (DAP), an intermediate involved in the bacterial biosynthesis of lysine and meso-diaminopimelic acid, an essential component of bacterial cell walls. In Sulfurimonas denitrificans (strain ATCC 33889 / DSM 1251) (Thiomicrospira denitrificans (strain ATCC 33889 / DSM 1251)), this protein is Succinyl-diaminopimelate desuccinylase.